A 170-amino-acid polypeptide reads, in one-letter code: 3-isopropylmalate dehydratase small subunit 1 (170 aa).

The protein belongs to the LeuD family. LeuD type 2 subfamily. In terms of assembly, heterodimer of LeuC and LeuD.

The catalysed reaction is (2R,3S)-3-isopropylmalate = (2S)-2-isopropylmalate. Its pathway is amino-acid biosynthesis; L-leucine biosynthesis; L-leucine from 3-methyl-2-oxobutanoate: step 2/4. In terms of biological role, catalyzes the isomerization between 2-isopropylmalate and 3-isopropylmalate, via the formation of 2-isopropylmaleate. This chain is 3-isopropylmalate dehydratase small subunit 1 (leuD1), found in Methanopyrus kandleri (strain AV19 / DSM 6324 / JCM 9639 / NBRC 100938).